The primary structure comprises 102 residues: Small ribosomal subunit protein uS10 (102 aa).

This sequence belongs to the universal ribosomal protein uS10 family. In terms of assembly, part of the 30S ribosomal subunit.

Its function is as follows. Involved in the binding of tRNA to the ribosomes. This chain is Small ribosomal subunit protein uS10, found in Listeria innocua serovar 6a (strain ATCC BAA-680 / CLIP 11262).